Here is a 384-residue protein sequence, read N- to C-terminus: Tryptophan--tRNA ligase (384 aa).

Residues 81–89 (PSGPMHIGH) carry the 'HIGH' region motif. The 'KMSKS' region signature appears at 252–256 (KMSAS).

Belongs to the class-I aminoacyl-tRNA synthetase family.

The protein localises to the cytoplasm. It carries out the reaction tRNA(Trp) + L-tryptophan + ATP = L-tryptophyl-tRNA(Trp) + AMP + diphosphate + H(+). The chain is Tryptophan--tRNA ligase from Thermococcus onnurineus (strain NA1).